Reading from the N-terminus, the 316-residue chain is Rhomboid-related protein 4 (316 aa).

Residues 1-21 lie on the Cytoplasmic side of the membrane; it reads MQRRTRGIDTGLLLLLSQVFH. A helical membrane pass occupies residues 22–42; the sequence is IGINNIPPVTLATLAVNVWFF. The Extracellular portion of the chain corresponds to 43–103; it reads LNPWKPLYHS…KLEKRLGSRW (61 aa). The chain crosses the membrane as a helical span at residues 104-124; that stretch reads FAYIIATFSLLTGVVYLLLQF. Residues 125–137 lie on the Cytoplasmic side of the membrane; sequence ASAELMNQPDFKR. Residues 138 to 154 traverse the membrane as a helical segment; that stretch reads NCAVGFSGVLFALKVLS. Residue serine 144 is the Nucleophile of the active site. The Extracellular segment spans residues 155–182; that stretch reads NHYCPGGFVNILGFPVPNRFACWAELAA. A helical transmembrane segment spans residues 183 to 203; the sequence is IHFCTPGTSFAGHLAGILVGL. Histidine 195 is an active-site residue. Over 204–316 the chain is Cytoplasmic; sequence MYTQGPLKKI…RQRLHRFDGQ (113 aa). A ubiquitin-binding domain (UBD) region spans residues 269–284; sequence SEEEQLERALRASIWD. The segment at 301 to 316 is VCP/p97-interacting motif (VIM); the sequence is PEEEMRRQRLHRFDGQ.

Belongs to the peptidase S54 family. In terms of assembly, interacts with BIK and STEAP3. Interacts (via C-terminal domain) with VCP. Interacts with ubiquitin and ubiquitinated proteins. Expressed in intestine, lung, brain, kidney, epididymis and testis.

The protein localises to the endoplasmic reticulum membrane. The protein resides in the mitochondrion membrane. It catalyses the reaction Cleaves type-1 transmembrane domains using a catalytic dyad composed of serine and histidine that are contributed by different transmembrane domains.. Its activity is regulated as follows. Inhibited by aprotinin. Functionally, intramembrane-cleaving serine protease that cleaves single transmembrane or multi-pass membrane proteins in the hydrophobic plane of the membrane, luminal loops and juxtamembrane regions. Involved in regulated intramembrane proteolysis and the subsequent release of functional polypeptides from their membrane anchors. Functional component of endoplasmic reticulum-associated degradation (ERAD) for misfolded membrane proteins. Required for the degradation process of some specific misfolded endoplasmic reticulum (ER) luminal proteins. Participates in the transfer of misfolded proteins from the ER to the cytosol, where they are destroyed by the proteasome in a ubiquitin-dependent manner. Functions in BIK, MPZ, PKD1, PTCRA, RHO, STEAP3 and TRAC processing. Involved in the regulation of exosomal secretion; inhibits the TSAP6-mediated secretion pathway. Involved in the regulation of apoptosis; modulates BIK-mediated apoptotic activity. Also plays a role in the regulation of spermatogenesis; inhibits apoptotic activity in spermatogonia. This is Rhomboid-related protein 4 (Rhbdd1) from Rattus norvegicus (Rat).